A 461-amino-acid polypeptide reads, in one-letter code: Dihydrolipoyl dehydrogenase (461 aa).

Residues 34–42, Lys-51, and Gly-114 each bind FAD; that span reads EEDQAGGTC. A disulfide bond links Cys-42 and Cys-47. NAD(+) contacts are provided by residues 177 to 181, Glu-200, and 261 to 264; these read GGGVI and AIGR. Residues Asp-304 and Ala-312 each contribute to the FAD site. The Proton acceptor role is filled by His-436.

Belongs to the class-I pyridine nucleotide-disulfide oxidoreductase family. Requires FAD as cofactor.

It is found in the cytoplasm. The catalysed reaction is N(6)-[(R)-dihydrolipoyl]-L-lysyl-[protein] + NAD(+) = N(6)-[(R)-lipoyl]-L-lysyl-[protein] + NADH + H(+). The branched-chain alpha-keto dehydrogenase complex catalyzes the overall conversion of alpha-keto acids to acyl-CoA and CO(2). It contains multiple copies of 3 enzymatic components: branched-chain alpha-keto acid decarboxylase (E1), lipoamide acyltransferase (E2) and lipoamide dehydrogenase (E3). The polypeptide is Dihydrolipoyl dehydrogenase (lpdA) (Chlamydia pneumoniae (Chlamydophila pneumoniae)).